The primary structure comprises 403 residues: Protein-export membrane protein SecD (403 aa).

A run of 6 helical transmembrane segments spans residues 13–33 (LLVITAVWIVAATSLAVKGVN), 245–265 (FLKMAMIAGAIAFAAVSVIIA), 285–305 (VVFLIGLASLTGFTIDLPALA), 306–326 (GIILSIGSGVDDLIVITDEIV), 347–367 (VVLASFATLAAAMAVLFVAGM), and 368–388 (GLLKGFAIMTIAGAFYGVVIT).

Belongs to the SecD/SecF family. SecD subfamily. Part of the protein translocation apparatus. Forms a complex with SecF.

It is found in the cell membrane. Its function is as follows. Involved in protein export. The sequence is that of Protein-export membrane protein SecD from Methanopyrus kandleri (strain AV19 / DSM 6324 / JCM 9639 / NBRC 100938).